Reading from the N-terminus, the 904-residue chain is MAESSESLSASSPARQRRRISDPLTSSPGRSSRRADALTSSPGRDLPPFEDESEGLLGTEGPMEEEEDGEELIGDGMERDYRPIPELDVYEAEGLALDDEDVEELTASQREAAERTMRQRDREAGRGLGRMRRGLLYDSSEEDEERPARKRRHVERATEDGEEDEEMIESIENLEDLKGHSVREWVSMAGPRLEIHHRFKNFLRTHVDSHGHNVFKERISDMCKENRESLVVNYEDLAAREHVLAYFLPEAPAELLQIFDEAALEVVLAMYPKYDRITNHIHVRISHLPLVEELRSLRQLHLNQLIRTSGVVTSCTGVLPQLSMVKYNCSKCNFVLGPFCQSQNQEVKPGSCPECQSAGPFEINMEETIYQNYQRIRIQESPGKVAAGRLPRSKDAILLADLVDSCKPGDEIELTGIYHNNYDGSLNTANGFPVFATIILANHVAKKDNKVAVGELTDEDVKMITGLSKDQQIGEKIFASIAPSIYGHEDIKRGLALALFGGEPKNPGGKHKVRGDINVLLCGDPGTAKSQFLKYIEKVSSRAIFTTGQGASAVGLTAYVQRHPVSREWTLEAGALVLADRGVCLIDEFDKMNDQDRTSIHEAMEQQSISISKAGIVTSLQARCTVIAAANPIGGRYDPSLTFSENVDLTEPIISRFDVLCVVRDTVDPVQDEMLARFVVGSHVRHHPSNKKDEGLTNGGTLEPAMPNTYGVEPLPQEVLKKYIIYAKERVRPKLNQMDQDKVARMYSDLRKESMATGSIPITVRHIESMIRMAEAHARMHLRDYVMEDDVNMAIRVMMESFIDTQKFSVMRSMRKTFARYLSFRRDNNDLLLFILKQLVAEQVTYQRNRFGAQQDTIEIPEKDLMDKARQINIHNLSAFYDSDLFKFNKFSRDLKRKLILQQF.

Over residues 1 to 12 (MAESSESLSASS) the composition is skewed to low complexity. The tract at residues 1–166 (MAESSESLSA…ATEDGEEDEE (166 aa)) is disordered. The residue at position 2 (Ala2) is an N-acetylalanine. The tract at residues 2–257 (AESSESLSAS…LPEAPAELLQ (256 aa)) is interaction with KAT7. 2 positions are modified to phosphoserine: Ser12 and Ser21. The residue at position 25 (Thr25) is a Phosphothreonine. Phosphoserine occurs at positions 26, 27, and 32. Thr39 carries the phosphothreonine modification. Ser40 bears the Phosphoserine; by CDC7 mark. Position 41 is a phosphoserine (Ser41). Ser53 is modified (phosphoserine; by CDC7). Thr59 carries the phosphothreonine modification. Residues 61 to 130 (GPMEEEEDGE…DREAGRGLGR (70 aa)) are interaction with DNJC9. Residues 62–73 (PMEEEEDGEELI) show a composition bias toward acidic residues. Basic and acidic residues predominate over residues 76-85 (GMERDYRPIP). The segment covering 88-104 (DVYEAEGLALDDEDVEE) has biased composition (acidic residues). Ser108 carries the post-translational modification Phosphoserine. Over residues 111 to 125 (EAAERTMRQRDREAG) the composition is skewed to basic and acidic residues. At Tyr137 the chain carries Phosphotyrosine. Phosphoserine occurs at positions 139 and 140. Lys178 is covalently cross-linked (Glycyl lysine isopeptide (Lys-Gly) (interchain with G-Cter in SUMO2)). Residue Lys216 is modified to N6-acetyllysine. A C4-type zinc finger spans residues 329–355 (CSKCNFVLGPFCQSQNQEVKPGSCPEC). 2 positions are modified to phosphoserine: Ser381 and Ser484. Residues 473-680 (IGEKIFASIA…QDEMLARFVV (208 aa)) form the MCM domain. Residues Ser530 and Gln531 each coordinate ADP. The Arginine finger signature appears at 655 to 658 (SRFD).

It belongs to the MCM family. As to quaternary structure, component of the MCM2-7 complex. The complex forms a toroidal hexameric ring with the proposed subunit order MCM2-MCM6-MCM4-MCM7-MCM3-MCM5. Component of the CMG helicase complex, a hexameric ring of related MCM2-7 subunits stabilized by CDC45 and the tetrameric GINS complex. Interacts with DBF4. Interacts with KAT7. May interact with MCM10. Component of the replisome complex composed of at least DONSON, MCM2, MCM7, PCNA and TICRR. Forms a co-chaperone complex with DNAJC9 and histone H3.3-H4 heterodimers. Within the complex, interacts (via N-terminus) with DNAJC9 (via C-terminus); the interaction is histone-dependent. Interacts with AGER/RAGE; the interaction is increased following DNA replication stress and stabilizes the MCM2-7 complex at replication forks. Post-translationally, phosphorylated on Ser-108 by ATR in proliferating cells. Ser-108 proliferation is increased by genotoxic agents. Ser-40 is mediated by the CDC7-DBF4 and CDC7-DBF4B complexes, while Ser-53 phosphorylation is only mediated by the CDC7-DBF4 complex. Phosphorylation by the CDC7-DBF4 complex during G1/S phase is required for the initiation of DNA replication. Acetylated by MCM3AP. In terms of processing, O-glycosylated (O-GlcNAcylated), in a cell cycle-dependent manner.

The protein resides in the nucleus. The protein localises to the chromosome. It catalyses the reaction ATP + H2O = ADP + phosphate + H(+). In terms of biological role, acts as a component of the MCM2-7 complex (MCM complex) which is the replicative helicase essential for 'once per cell cycle' DNA replication initiation and elongation in eukaryotic cells. Core component of CDC45-MCM-GINS (CMG) helicase, the molecular machine that unwinds template DNA during replication, and around which the replisome is built. The active ATPase sites in the MCM2-7 ring are formed through the interaction surfaces of two neighboring subunits such that a critical structure of a conserved arginine finger motif is provided in trans relative to the ATP-binding site of the Walker A box of the adjacent subunit. The six ATPase active sites, however, are likely to contribute differentially to the complex helicase activity. Required for the entry in S phase and for cell division. Plays a role in terminally differentiated hair cells development of the cochlea and induces cells apoptosis. This chain is DNA replication licensing factor MCM2 (Mcm2), found in Mus musculus (Mouse).